Here is a 76-residue protein sequence, read N- to C-terminus: DNA-directed RNA polymerase subunit omega (76 aa).

This sequence belongs to the RNA polymerase subunit omega family. In terms of assembly, in cyanobacteria the RNAP catalytic core is composed of 2 alpha, 1 beta, 1 beta', 1 gamma and 1 omega subunit. When a sigma factor is associated with the core the holoenzyme is formed, which can initiate transcription.

The enzyme catalyses RNA(n) + a ribonucleoside 5'-triphosphate = RNA(n+1) + diphosphate. Its function is as follows. Promotes RNA polymerase assembly. Latches the N- and C-terminal regions of the beta' subunit thereby facilitating its interaction with the beta and alpha subunits. This Acaryochloris marina (strain MBIC 11017) protein is DNA-directed RNA polymerase subunit omega.